Here is a 379-residue protein sequence, read N- to C-terminus: UDP-4-amino-4-deoxy-L-arabinose--oxoglutarate aminotransferase (379 aa).

Residue Lys-182 is modified to N6-(pyridoxal phosphate)lysine.

Belongs to the DegT/DnrJ/EryC1 family. ArnB subfamily. As to quaternary structure, homodimer. Pyridoxal 5'-phosphate serves as cofactor.

It catalyses the reaction UDP-4-amino-4-deoxy-beta-L-arabinose + 2-oxoglutarate = UDP-beta-L-threo-pentopyranos-4-ulose + L-glutamate. It functions in the pathway nucleotide-sugar biosynthesis; UDP-4-deoxy-4-formamido-beta-L-arabinose biosynthesis; UDP-4-deoxy-4-formamido-beta-L-arabinose from UDP-alpha-D-glucuronate: step 2/3. The protein operates within bacterial outer membrane biogenesis; lipopolysaccharide biosynthesis. Its function is as follows. Catalyzes the conversion of UDP-4-keto-arabinose (UDP-Ara4O) to UDP-4-amino-4-deoxy-L-arabinose (UDP-L-Ara4N). The modified arabinose is attached to lipid A and is required for resistance to polymyxin and cationic antimicrobial peptides. In Salmonella agona (strain SL483), this protein is UDP-4-amino-4-deoxy-L-arabinose--oxoglutarate aminotransferase.